A 95-amino-acid chain; its full sequence is Small ribosomal subunit protein uS19 (95 aa).

The segment at 75 to 95 is disordered; it reads APTRSFRGHGGKKADKRGKMK. The span at 80 to 95 shows a compositional bias: basic residues; the sequence is FRGHGGKKADKRGKMK.

Belongs to the universal ribosomal protein uS19 family.

In terms of biological role, protein S19 forms a complex with S13 that binds strongly to the 16S ribosomal RNA. The polypeptide is Small ribosomal subunit protein uS19 (Roseiflexus sp. (strain RS-1)).